The primary structure comprises 336 residues: Phospho-N-acetylmuramoyl-pentapeptide-transferase (336 aa).

10 helical membrane-spanning segments follow: residues 3-23 (LTLI…PYFI), 53-73 (GGTV…LFSI), 78-98 (SLAL…IGFL), 118-138 (LALQ…PSGI), 143-163 (VFGY…FWVV), 174-194 (GIDG…GVIA), 200-220 (FDVL…FCFN), 226-246 (VFMG…ISIA), 251-271 (WTLL…MLQV), and 316-336 (AFLW…LYVF).

Belongs to the glycosyltransferase 4 family. MraY subfamily. It depends on Mg(2+) as a cofactor.

It is found in the cell membrane. It carries out the reaction UDP-N-acetyl-alpha-D-muramoyl-L-alanyl-gamma-D-glutamyl-L-lysyl-D-alanyl-D-alanine + di-trans,octa-cis-undecaprenyl phosphate = Mur2Ac(oyl-L-Ala-gamma-D-Glu-L-Lys-D-Ala-D-Ala)-di-trans,octa-cis-undecaprenyl diphosphate + UMP. Its pathway is cell wall biogenesis; peptidoglycan biosynthesis. In terms of biological role, catalyzes the initial step of the lipid cycle reactions in the biosynthesis of the cell wall peptidoglycan: transfers peptidoglycan precursor phospho-MurNAc-pentapeptide from UDP-MurNAc-pentapeptide onto the lipid carrier undecaprenyl phosphate, yielding undecaprenyl-pyrophosphoryl-MurNAc-pentapeptide, known as lipid I. The sequence is that of Phospho-N-acetylmuramoyl-pentapeptide-transferase from Streptococcus pyogenes serotype M3 (strain ATCC BAA-595 / MGAS315).